A 226-amino-acid polypeptide reads, in one-letter code: 7-cyano-7-deazaguanine synthase (226 aa).

Residue 7-17 participates in ATP binding; sequence LSGGMDSLVTT. Positions 187, 195, 198, and 201 each coordinate Zn(2+).

Belongs to the QueC family. It depends on Zn(2+) as a cofactor.

The catalysed reaction is 7-carboxy-7-deazaguanine + NH4(+) + ATP = 7-cyano-7-deazaguanine + ADP + phosphate + H2O + H(+). It functions in the pathway purine metabolism; 7-cyano-7-deazaguanine biosynthesis. Catalyzes the ATP-dependent conversion of 7-carboxy-7-deazaguanine (CDG) to 7-cyano-7-deazaguanine (preQ(0)). In Chlorobium phaeobacteroides (strain DSM 266 / SMG 266 / 2430), this protein is 7-cyano-7-deazaguanine synthase.